A 197-amino-acid chain; its full sequence is Adenylyl-sulfate kinase (197 aa).

An ATP-binding site is contributed by 31–38 (GLSGAGKS). Ser105 serves as the catalytic Phosphoserine intermediate.

The protein belongs to the APS kinase family.

It carries out the reaction adenosine 5'-phosphosulfate + ATP = 3'-phosphoadenylyl sulfate + ADP + H(+). It participates in sulfur metabolism; hydrogen sulfide biosynthesis; sulfite from sulfate: step 2/3. Functionally, catalyzes the synthesis of activated sulfate. In Aeromonas hydrophila subsp. hydrophila (strain ATCC 7966 / DSM 30187 / BCRC 13018 / CCUG 14551 / JCM 1027 / KCTC 2358 / NCIMB 9240 / NCTC 8049), this protein is Adenylyl-sulfate kinase.